The following is a 338-amino-acid chain: Arginine N-succinyltransferase subunit alpha (338 aa).

It belongs to the succinylarginine dihydrolase family. In terms of assembly, heterotetramer of two alpha and two beta subunits.

It carries out the reaction succinyl-CoA + L-arginine = N(2)-succinyl-L-arginine + CoA + H(+). It participates in amino-acid degradation; L-arginine degradation via AST pathway; L-glutamate and succinate from L-arginine: step 1/5. Catalyzes the transfer of succinyl-CoA to arginine to produce N(2)-succinylarginine. Also acts on L-ornithine. This is Arginine N-succinyltransferase subunit alpha (astA) from Pseudomonas aeruginosa (strain ATCC 15692 / DSM 22644 / CIP 104116 / JCM 14847 / LMG 12228 / 1C / PRS 101 / PAO1).